Here is a 98-residue protein sequence, read N- to C-terminus: Co-chaperonin GroES (98 aa).

Belongs to the GroES chaperonin family. Heptamer of 7 subunits arranged in a ring. Interacts with the chaperonin GroEL.

The protein resides in the cytoplasm. Together with the chaperonin GroEL, plays an essential role in assisting protein folding. The GroEL-GroES system forms a nano-cage that allows encapsulation of the non-native substrate proteins and provides a physical environment optimized to promote and accelerate protein folding. GroES binds to the apical surface of the GroEL ring, thereby capping the opening of the GroEL channel. This chain is Co-chaperonin GroES, found in Clavibacter michiganensis subsp. michiganensis (strain NCPPB 382).